We begin with the raw amino-acid sequence, 144 residues long: Hemoglobin embryonic subunit alpha (144 aa).

Residues 3-144 (SLSAKDKDVV…LALALAEKYR (142 aa)) form the Globin domain. Residue His61 participates in O2 binding. Residue His90 coordinates heme b.

It belongs to the globin family. In terms of assembly, heterotetramer of two alpha chains and two beta chains. Red blood cells.

Involved in oxygen transport from gills to the various peripheral tissues. This Oryzias latipes (Japanese rice fish) protein is Hemoglobin embryonic subunit alpha.